The sequence spans 603 residues: Zyxin (603 aa).

Over residues 1–13 (MGPPPPPPPPPLL) the composition is skewed to pro residues. Disordered stretches follow at residues 1–131 (MGPP…HRDP), 166–193 (TQYA…PYSS), 218–237 (ATTT…NKYG), 310–333 (RDEG…SASS), and 363–395 (LNQP…TTST). Residues 69 to 95 (VRGDVENLSDGRLDRPHQQLPDGDRTY) are compositionally biased toward basic and acidic residues. The span at 184 to 193 (EATYVSPYSS) shows a compositional bias: polar residues. The segment covering 218–234 (ATTTTSSNSLNENNNSN) has biased composition (low complexity). 3 stretches are compositionally biased toward polar residues: residues 315–333 (TESQ…SASS), 363–373 (LNQPADTSPSI), and 382–391 (PDSSRANYSA). 3 consecutive LIM zinc-binding domains span residues 409–470 (NICV…SLEK), 471–529 (CTAC…KFAP), and 530–601 (RCAL…RVVS).

The protein belongs to the zyxin/ajuba family. As to quaternary structure, interacts with dyc-1. Interacts with glh-1 and glh-3. As to expression, expressed in neurons and body wall muscle. Expressed in pharyngeal, enteric and uterine muscles and in spermatheca.

It localises to the nucleus. Its subcellular location is the cytoplasm. The protein resides in the myofibril. The protein localises to the sarcomere. It is found in the m line. It localises to the cell projection. Its subcellular location is the axon. The protein resides in the cell junction. The protein localises to the focal adhesion. It is found in the cytoskeleton. In terms of biological role, functions both as a mechanical stabilizer (via LIM domains) of focal adhesions, and as a sensor component for muscle cell damage (via N-terminus). Regulates, stabilizes and maintains posterior lateral mechanosensory (PLM) synaptic branch extension and new synapse formation and growth during larval development. This is Zyxin from Caenorhabditis elegans.